The primary structure comprises 34 residues: Delta-conotoxin AtVIA (34 aa).

A propeptide spanning residues L1–K4 is cleaved from the precursor. Residue Q5 is modified to Pyrrolidone carboxylic acid. 3 disulfide bridges follow: C6–C23, C13–C27, and C22–C31.

Expressed by the venom duct.

It is found in the secreted. Probable toxin from a worm-hunter cone snail. Shows an excitatory activity on a majority of mouse lumbar dorsal root ganglion (DRG) neurons. Very probably inhibits the inactivation of voltage-gated sodium channels (Nav). In Conus ateralbus (Cone snail), this protein is Delta-conotoxin AtVIA.